The primary structure comprises 740 residues: Elongation factor 2 (740 aa).

The region spanning 23–264 (AQIRNAGTLA…MIIEHVPPPN (242 aa)) is the tr-type G domain. GTP contacts are provided by residues 32 to 39 (AHVDHGKT), 98 to 102 (DTPGH), and 152 to 155 (NKID). Position 605 is a diphthamide (H605).

This sequence belongs to the TRAFAC class translation factor GTPase superfamily. Classic translation factor GTPase family. EF-G/EF-2 subfamily.

The protein localises to the cytoplasm. Its function is as follows. Catalyzes the GTP-dependent ribosomal translocation step during translation elongation. During this step, the ribosome changes from the pre-translocational (PRE) to the post-translocational (POST) state as the newly formed A-site-bound peptidyl-tRNA and P-site-bound deacylated tRNA move to the P and E sites, respectively. Catalyzes the coordinated movement of the two tRNA molecules, the mRNA and conformational changes in the ribosome. The sequence is that of Elongation factor 2 from Pyrobaculum calidifontis (strain DSM 21063 / JCM 11548 / VA1).